The sequence spans 199 residues: GTP cyclohydrolase 1 (199 aa).

Positions 89, 92, and 161 each coordinate Zn(2+).

The protein belongs to the GTP cyclohydrolase I family. Homomer.

It carries out the reaction GTP + H2O = 7,8-dihydroneopterin 3'-triphosphate + formate + H(+). Its pathway is cofactor biosynthesis; 7,8-dihydroneopterin triphosphate biosynthesis; 7,8-dihydroneopterin triphosphate from GTP: step 1/1. The protein is GTP cyclohydrolase 1 of Bifidobacterium longum (strain DJO10A).